A 332-amino-acid chain; its full sequence is DNA double-strand break repair nuclease NurA (332 aa).

Aspartate 57 and aspartate 132 together coordinate Mn(2+).

It belongs to the NurA family. It depends on Mn(2+) as a cofactor.

In terms of biological role, involved in DNA double-strand break (DSB) repair. Probably acts with HerA to stimulate resection of the 5' strand and produce the long 3' single-strand that is required for RadA loading. Exhibits both single-stranded endonuclease activity and 5'-3' exonuclease activity on single-stranded and double-stranded DNA. The protein is DNA double-strand break repair nuclease NurA of Sulfolobus acidocaldarius (strain ATCC 33909 / DSM 639 / JCM 8929 / NBRC 15157 / NCIMB 11770).